The following is a 1051-amino-acid chain: Eukaryotic translation initiation factor 3 subunit A (1051 aa).

Positions 92–121 form a coiled coil; that stretch reads LKKFIELAEKKVTEAQAKADEIQSSLESAA. Positions 339–523 constitute a PCI domain; that stretch reads MTKAASFVLL…GVLTFDTDIF (185 aa). Positions 608-905 form a coiled coil; it reads RVLIEKKKEA…EAEARRAARK (298 aa). 4 stretches are compositionally biased toward basic and acidic residues: residues 617-632, 642-664, 794-901, and 916-926; these read AATD…EETR, EAEK…RDEQ, KEVS…EARR, and AELERPVERTA. Disordered regions lie at residues 617–664 and 794–1051; these read AATD…RDEQ and KEVS…QQQQ. Low complexity-rich tracts occupy residues 948-961 and 1010-1039; these read KEAA…AAAE and SSSS…SPAP.

This sequence belongs to the eIF-3 subunit A family. In terms of assembly, component of the eukaryotic translation initiation factor 3 (eIF-3) complex.

It is found in the cytoplasm. Functionally, RNA-binding component of the eukaryotic translation initiation factor 3 (eIF-3) complex, which is involved in protein synthesis of a specialized repertoire of mRNAs and, together with other initiation factors, stimulates binding of mRNA and methionyl-tRNAi to the 40S ribosome. The eIF-3 complex specifically targets and initiates translation of a subset of mRNAs involved in cell proliferation. The polypeptide is Eukaryotic translation initiation factor 3 subunit A (tif32) (Aspergillus fumigatus (strain CBS 144.89 / FGSC A1163 / CEA10) (Neosartorya fumigata)).